The following is a 406-amino-acid chain: Tryptophan synthase beta chain (406 aa).

K99 is subject to N6-(pyridoxal phosphate)lysine.

This sequence belongs to the TrpB family. Tetramer of two alpha and two beta chains. The cofactor is pyridoxal 5'-phosphate.

It catalyses the reaction (1S,2R)-1-C-(indol-3-yl)glycerol 3-phosphate + L-serine = D-glyceraldehyde 3-phosphate + L-tryptophan + H2O. It functions in the pathway amino-acid biosynthesis; L-tryptophan biosynthesis; L-tryptophan from chorismate: step 5/5. Its function is as follows. The beta subunit is responsible for the synthesis of L-tryptophan from indole and L-serine. The sequence is that of Tryptophan synthase beta chain from Brucella anthropi (strain ATCC 49188 / DSM 6882 / CCUG 24695 / JCM 21032 / LMG 3331 / NBRC 15819 / NCTC 12168 / Alc 37) (Ochrobactrum anthropi).